The sequence spans 194 residues: uncharacterized protein (194 aa).

Residues 77 to 92 are compositionally biased toward polar residues; sequence QTQPQHQTLSQHLPQT. The disordered stretch occupies residues 77 to 96; the sequence is QTQPQHQTLSQHLPQTHHTD. Residues 169-189 traverse the membrane as a helical segment; it reads FWEILLLIILIAVLVYGIYWL.

It localises to the host membrane. Its subcellular location is the virion. This is an uncharacterized protein from Acanthamoeba polyphaga (Amoeba).